A 530-amino-acid polypeptide reads, in one-letter code: Calcium-dependent protein kinase 14 (530 aa).

The N-myristoyl glycine moiety is linked to residue G2. The Protein kinase domain maps to 54–312 (YKLGRELGRG…AQQVLDHPWI (259 aa)). Residues 60–68 (LGRGEFGVT) and K83 contribute to the ATP site. D178 serves as the catalytic Proton acceptor. S218 is modified (phosphoserine). Positions 318-348 (ASNVSLGETVRARLKQFSVMNKLKKRALRVI) are autoinhibitory domain. 4 EF-hand domains span residues 355–390 (EETS…LGIV), 391–426 (VPQD…IRKL), 427–462 (GNDE…DVDT), and 463–498 (TSEE…GTDW). 18 residues coordinate Ca(2+): D368, S370, K374, E379, D404, D406, D408, Y410, E415, D440, N442, S444, Y446, E451, D476, N478, D480, and K482. S484 carries the post-translational modification Phosphoserine. Position 487 (E487) interacts with Ca(2+).

Belongs to the protein kinase superfamily. Ser/Thr protein kinase family. CDPK subfamily.

Its subcellular location is the membrane. It catalyses the reaction L-seryl-[protein] + ATP = O-phospho-L-seryl-[protein] + ADP + H(+). It carries out the reaction L-threonyl-[protein] + ATP = O-phospho-L-threonyl-[protein] + ADP + H(+). With respect to regulation, activated by calcium. Autophosphorylation may play an important role in the regulation of the kinase activity. In terms of biological role, may play a role in signal transduction pathways that involve calcium as a second messenger. The protein is Calcium-dependent protein kinase 14 (CPK14) of Arabidopsis thaliana (Mouse-ear cress).